The sequence spans 279 residues: Probable cyclic nucleotide phosphodiesterase Psyc_2036 (279 aa).

Positions 23, 25, 70, 100, 179, 218, and 220 each coordinate Fe cation. Residues H25, D70, and 100-101 (NH) contribute to the AMP site. Residue H220 participates in AMP binding.

It belongs to the cyclic nucleotide phosphodiesterase class-III family. The cofactor is Fe(2+).

The protein is Probable cyclic nucleotide phosphodiesterase Psyc_2036 of Psychrobacter arcticus (strain DSM 17307 / VKM B-2377 / 273-4).